The sequence spans 860 residues: Leucine--tRNA ligase (860 aa).

Residues 42–52 (PYPSGRLHMGH) carry the 'HIGH' region motif. Residues 619-623 (KMSKS) carry the 'KMSKS' region motif. Lys622 serves as a coordination point for ATP.

This sequence belongs to the class-I aminoacyl-tRNA synthetase family.

It is found in the cytoplasm. It catalyses the reaction tRNA(Leu) + L-leucine + ATP = L-leucyl-tRNA(Leu) + AMP + diphosphate. The sequence is that of Leucine--tRNA ligase from Escherichia coli O45:K1 (strain S88 / ExPEC).